Consider the following 478-residue polypeptide: UDP-N-acetylmuramate--L-alanine ligase (478 aa).

ATP is bound at residue 122-128 (GTHGKTT).

It belongs to the MurCDEF family.

It is found in the cytoplasm. It catalyses the reaction UDP-N-acetyl-alpha-D-muramate + L-alanine + ATP = UDP-N-acetyl-alpha-D-muramoyl-L-alanine + ADP + phosphate + H(+). It participates in cell wall biogenesis; peptidoglycan biosynthesis. In terms of biological role, cell wall formation. This chain is UDP-N-acetylmuramate--L-alanine ligase, found in Stenotrophomonas maltophilia (strain K279a).